Reading from the N-terminus, the 368-residue chain is F-box only protein 28 (368 aa).

Positions 1 to 11 (MAAASEERMAE) are enriched in basic and acidic residues. The disordered stretch occupies residues 1 to 56 (MAAASEERMAEEGGGGHGDGGSCSAAGSAQRQPPAPPSQAPPPGSQAPAAPALAPD). Over residues 12–21 (EGGGGHGDGG) the composition is skewed to gly residues. Residues 22–32 (SCSAAGSAQRQ) show a composition bias toward low complexity. Residues 33–45 (PPAPPSQAPPPGS) are compositionally biased toward pro residues. Low complexity predominate over residues 46-55 (QAPAAPALAP). The region spanning 61 to 109 (NNTLVALPIVAIENILSFMSYDEISQLRLVCKRMDLVCQRMLNQGFLKV) is the F-box domain. 2 positions are modified to phosphoserine: S235 and S242. A Phosphothreonine modification is found at T270. The tract at residues 328-368 (MESAVGTSSGSGQSEESPRKRRKATEAIDSLRKSKRLRNRK) is disordered. At S344 the chain carries Phosphoserine.

Part of a SCF (SKP1-cullin-F-box) protein ligase complex.

Its subcellular location is the chromosome. It localises to the centromere. It is found in the kinetochore. Its function is as follows. Probably recognizes and binds to some phosphorylated proteins and promotes their ubiquitination and degradation. The polypeptide is F-box only protein 28 (Fbxo28) (Mus musculus (Mouse)).